We begin with the raw amino-acid sequence, 546 residues long: MTKYVFVTGGVVSSLGKGIAAASLGAILESRGIKVTHLKLDPYINVDPGTMSPFQHGEVFVTEDGAETDLDLGHYERFTSAKMSKRNNFTTGQIYEAVIKKERRGEYLGKTVQVIPHITDEIKSYVKRGAEGADVAIVEVGGTVGDIESLPFLEAIRQMGIEEGRNATCFIHLTLLPYIPTAGELKTKPTQHSVKELREIGIQPDILLCRADRSIPADERRKIALFCNVMPEAVIECLDADSIYKIPGQLHDQMLDEIVCHKLGILARAADLSVWENLIRALENPKQAVDIAFVGKYVDLTESYKSLIEALNHAGMHTESKVNIHYLDSEEIERSGCAVLEKMDAILVPGGFGKRGTEGKIAAIRYARENKVPYLGICLGMQLAVVEFARDVAGMAEAHSTEFERETPFPVIGLITEWADRSGKVEKRSEDSDLGGTMRLGGQVCKLADGTLAREVYGSGEIMERHRHRYEVNNTLLAQLEEKGLVVSGRAPVTDLCEMVELPADVHPWFVGCQFHPEFTSNPRKGHPLFTAYVKAAIARHSASRG.

Residues 1-265 (MTKYVFVTGG…DEIVCHKLGI (265 aa)) form an amidoligase domain region. Residue S13 coordinates CTP. Position 13 (S13) interacts with UTP. ATP is bound by residues 14–19 (SLGKGI) and D71. Residues D71 and E139 each coordinate Mg(2+). CTP is bound by residues 146–148 (DIE), 186–191 (KTKPTQ), and K222. Residues 186-191 (KTKPTQ) and K222 each bind UTP. Residues 290 to 543 (DIAFVGKYVD…VKAAIARHSA (254 aa)) form the Glutamine amidotransferase type-1 domain. An L-glutamine-binding site is contributed by G351. C378 serves as the catalytic Nucleophile; for glutamine hydrolysis. L-glutamine-binding positions include 379 to 382 (LGMQ), E402, and R469. Catalysis depends on residues H516 and E518.

The protein belongs to the CTP synthase family. As to quaternary structure, homotetramer.

The catalysed reaction is UTP + L-glutamine + ATP + H2O = CTP + L-glutamate + ADP + phosphate + 2 H(+). The enzyme catalyses L-glutamine + H2O = L-glutamate + NH4(+). It carries out the reaction UTP + NH4(+) + ATP = CTP + ADP + phosphate + 2 H(+). It participates in pyrimidine metabolism; CTP biosynthesis via de novo pathway; CTP from UDP: step 2/2. Its activity is regulated as follows. Allosterically activated by GTP, when glutamine is the substrate; GTP has no effect on the reaction when ammonia is the substrate. The allosteric effector GTP functions by stabilizing the protein conformation that binds the tetrahedral intermediate(s) formed during glutamine hydrolysis. Inhibited by the product CTP, via allosteric rather than competitive inhibition. Functionally, catalyzes the ATP-dependent amination of UTP to CTP with either L-glutamine or ammonia as the source of nitrogen. Regulates intracellular CTP levels through interactions with the four ribonucleotide triphosphates. In Azoarcus sp. (strain BH72), this protein is CTP synthase.